The chain runs to 519 residues: Exodeoxyribonuclease 7 large subunit (519 aa).

Residues 500–519 (VGRGKTRKPKEEPPAQGSLL) form a disordered region.

The protein belongs to the XseA family. As to quaternary structure, heterooligomer composed of large and small subunits.

The protein resides in the cytoplasm. The enzyme catalyses Exonucleolytic cleavage in either 5'- to 3'- or 3'- to 5'-direction to yield nucleoside 5'-phosphates.. Bidirectionally degrades single-stranded DNA into large acid-insoluble oligonucleotides, which are then degraded further into small acid-soluble oligonucleotides. The polypeptide is Exodeoxyribonuclease 7 large subunit (Cereibacter sphaeroides (strain ATCC 17029 / ATH 2.4.9) (Rhodobacter sphaeroides)).